The sequence spans 492 residues: 2,3-bisphosphoglycerate-independent phosphoglycerate mutase (492 aa).

Residues Asp-11 and Ser-61 each contribute to the Mn(2+) site. Residue Ser-61 is the Phosphoserine intermediate of the active site. Residues His-118, 147–148 (RD), Arg-177, Arg-183, 248–251 (RSDR), and Lys-321 contribute to the substrate site. Mn(2+) contacts are provided by Asp-387, His-391, Asp-428, His-429, and His-446.

It belongs to the BPG-independent phosphoglycerate mutase family. Monomer. It depends on Mn(2+) as a cofactor.

The catalysed reaction is (2R)-2-phosphoglycerate = (2R)-3-phosphoglycerate. Its pathway is carbohydrate degradation; glycolysis; pyruvate from D-glyceraldehyde 3-phosphate: step 3/5. Its function is as follows. Catalyzes the interconversion of 2-phosphoglycerate and 3-phosphoglycerate. The protein is 2,3-bisphosphoglycerate-independent phosphoglycerate mutase of Wolinella succinogenes (strain ATCC 29543 / DSM 1740 / CCUG 13145 / JCM 31913 / LMG 7466 / NCTC 11488 / FDC 602W) (Vibrio succinogenes).